Consider the following 333-residue polypeptide: Phosphate acyltransferase (333 aa).

The protein belongs to the PlsX family. Homodimer. Probably interacts with PlsY.

It localises to the cytoplasm. It catalyses the reaction a fatty acyl-[ACP] + phosphate = an acyl phosphate + holo-[ACP]. Its pathway is lipid metabolism; phospholipid metabolism. Functionally, catalyzes the reversible formation of acyl-phosphate (acyl-PO(4)) from acyl-[acyl-carrier-protein] (acyl-ACP). This enzyme utilizes acyl-ACP as fatty acyl donor, but not acyl-CoA. This Lactobacillus helveticus (strain DPC 4571) protein is Phosphate acyltransferase.